The sequence spans 850 residues: Trimethylguanosine synthase (850 aa).

The segment at 54–85 (NNAGDRVTEEEEDDHSSGTTESHSADEGDLDP) is disordered. Threonine 61 carries the post-translational modification Phosphothreonine. Serine 92 and serine 152 each carry phosphoserine. Disordered stretches follow at residues 278–311 (DQNAESSLKADGTTLSSSPNTAEDESLGSNDNDH), 327–454 (EVEQ…GGIP), and 523–566 (ISQE…PENC). The span at 363–374 (TPKESDISENRS) shows a compositional bias: basic and acidic residues. Residues 375-390 (SDQPAQELQESSGTNT) show a composition bias toward polar residues. Phosphoserine is present on residues serine 405 and serine 431. Residues 424–435 (DIDENPDSEVDD) are compositionally biased toward acidic residues. Over residues 548-562 (SMEKTDGLMETRDPE) the composition is skewed to basic and acidic residues. Serine 571 is modified (phosphoserine). The segment at 595–628 (TEGVANSPRAEAEVEIKKKKKKKKKNKNKKINGL) is disordered. Basic residues predominate over residues 611–624 (KKKKKKKKKNKNKK). Aspartate 713 lines the S-adenosyl-L-methionine pocket.

Belongs to the methyltransferase superfamily. Trimethylguanosine synthase family. May form homooligomers. Interacts with CREBBP/CBP, EED/WAIT1, EP300/P300, NCOA6/PRIP, PPARBP/PBP and SMN. As to expression, a 55 kDa isoform is widely expressed while a 90 kDa isoform is detected exclusively in brain and testis (at protein level).

Its subcellular location is the cytoplasm. It localises to the nucleus. The protein localises to the cajal body. The protein resides in the nucleolus. It carries out the reaction a 5'-end (N(7)-methyl 5'-triphosphoguanosine)-ribonucleoside in snRNA + S-adenosyl-L-methionine = a 5'-end (N(2),N(7)-dimethyl 5'-triphosphoguanosine)-ribonucleoside in snRNA + S-adenosyl-L-homocysteine + H(+). It catalyses the reaction a 5'-end (N(7)-methyl 5'-triphosphoguanosine)-ribonucleoside in snoRNA + S-adenosyl-L-methionine = a 5'-end (N(2),N(7)-dimethyl 5'-triphosphoguanosine)-ribonucleoside in snoRNA + S-adenosyl-L-homocysteine + H(+). The catalysed reaction is a 5'-end (N(2),N(7)-dimethyl 5'-triphosphoguanosine)-ribonucleoside in snRNA + S-adenosyl-L-methionine = a 5'-end (N(2),N(2),N(7)-trimethyl 5'-triphosphoguanosine)-ribonucleoside in snRNA + S-adenosyl-L-homocysteine + H(+). The enzyme catalyses a 5'-end (N(2),N(7)-dimethyl 5'-triphosphoguanosine)-ribonucleoside in snoRNA + S-adenosyl-L-methionine = a 5'-end (N(2),N(2),N(7)-trimethyl 5'-triphosphoguanosine)-ribonucleoside in snoRNA + S-adenosyl-L-homocysteine + H(+). In terms of biological role, catalyzes the 2 serial methylation steps for the conversion of the 7-monomethylguanosine (m(7)G) caps of snRNAs and snoRNAs to a 2,2,7-trimethylguanosine (m(2,2,7)G) cap structure. The enzyme is specific for guanine, and N7 methylation must precede N2 methylation. Hypermethylation of the m7G cap of U snRNAs leads to their concentration in nuclear foci, their colocalization with coilin and the formation of canonical Cajal bodies (CBs). Plays a role in transcriptional regulation. This chain is Trimethylguanosine synthase, found in Rattus norvegicus (Rat).